A 335-amino-acid chain; its full sequence is Pro-cathepsin H (335 aa).

A signal peptide spans 1 to 22 (MWATLPLLCAGAWLLGVPVCGA). Residues 23–97 (AELCVNSLEK…AEIKHKYLWS (75 aa)) constitute a propeptide, activation peptide. N-linked (GlcNAc...) asparagine glycosylation occurs at Asn101. 4 cysteine pairs are disulfide-bonded: Cys102-Cys327, Cys138-Cys181, Cys172-Cys214, and Cys272-Cys322. The propeptide occupies 106–115 (KSNYLRGTGP). Residue Cys141 is part of the active site. Residue Asn230 is glycosylated (N-linked (GlcNAc...) asparagine). Residues His281 and Asn301 contribute to the active site.

This sequence belongs to the peptidase C1 family. In terms of assembly, composed of a mini chain and a large chain. The large chain may be split into heavy and light chain. All chains are held together by disulfide bonds.

Its subcellular location is the lysosome. It catalyses the reaction Hydrolysis of proteins, acting as an aminopeptidase (notably, cleaving Arg-|-Xaa bonds) as well as an endopeptidase.. Important for the overall degradation of proteins in lysosomes. In Homo sapiens (Human), this protein is Pro-cathepsin H (CTSH).